The primary structure comprises 274 residues: ATP synthase subunit delta (274 aa).

The protein belongs to the ATPase delta chain family. As to quaternary structure, F-type ATPases have 2 components, F(1) - the catalytic core - and F(0) - the membrane proton channel. F(1) has five subunits: alpha(3), beta(3), gamma(1), delta(1), epsilon(1). F(0) has three main subunits: a(1), b(2) and c(10-14). The alpha and beta chains form an alternating ring which encloses part of the gamma chain. F(1) is attached to F(0) by a central stalk formed by the gamma and epsilon chains, while a peripheral stalk is formed by the delta and b chains.

The protein resides in the cell membrane. Functionally, f(1)F(0) ATP synthase produces ATP from ADP in the presence of a proton or sodium gradient. F-type ATPases consist of two structural domains, F(1) containing the extramembraneous catalytic core and F(0) containing the membrane proton channel, linked together by a central stalk and a peripheral stalk. During catalysis, ATP synthesis in the catalytic domain of F(1) is coupled via a rotary mechanism of the central stalk subunits to proton translocation. This protein is part of the stalk that links CF(0) to CF(1). It either transmits conformational changes from CF(0) to CF(1) or is implicated in proton conduction. In Salinispora arenicola (strain CNS-205), this protein is ATP synthase subunit delta.